The chain runs to 360 residues: tRNA pseudouridine synthase D (360 aa).

Asp-76 acts as the Nucleophile in catalysis. A TRUD domain is found at 151-332 (GMPNFFGYQR…HGIYKEKNAW (182 aa)).

Belongs to the pseudouridine synthase TruD family.

It catalyses the reaction uridine(13) in tRNA = pseudouridine(13) in tRNA. Responsible for synthesis of pseudouridine from uracil-13 in transfer RNAs. This chain is tRNA pseudouridine synthase D, found in Nitratiruptor sp. (strain SB155-2).